Consider the following 132-residue polypeptide: Small ribosomal subunit protein uS11 (132 aa).

The disordered stretch occupies residues 1–24; it reads MAAPKQAARKPRRRDRKSVPVGQA. The span at 7 to 16 shows a compositional bias: basic residues; the sequence is AARKPRRRDR.

Belongs to the universal ribosomal protein uS11 family. In terms of assembly, part of the 30S ribosomal subunit. Interacts with proteins S7 and S18. Binds to IF-3.

Its function is as follows. Located on the platform of the 30S subunit, it bridges several disparate RNA helices of the 16S rRNA. Forms part of the Shine-Dalgarno cleft in the 70S ribosome. The sequence is that of Small ribosomal subunit protein uS11 from Bifidobacterium longum (strain DJO10A).